The chain runs to 100 residues: Large ribosomal subunit protein bL28 (100 aa).

This sequence belongs to the bacterial ribosomal protein bL28 family.

The sequence is that of Large ribosomal subunit protein bL28 from Gluconacetobacter diazotrophicus (strain ATCC 49037 / DSM 5601 / CCUG 37298 / CIP 103539 / LMG 7603 / PAl5).